A 1231-amino-acid polypeptide reads, in one-letter code: ATP-dependent RNA helicase DHX30 (1231 aa).

A disordered region spans residues 39-65 (PDGLEGARQEDEEEQPPPPGAEEQSTA). DRBM domains follow at residues 80–148 (PKNL…CQLF) and 292–359 (PKNL…CQKL). The region spanning 488-656 (LSAIEQNPVV…FGGCPVVKVP (169 aa)) is the Helicase ATP-binding domain. 501–508 (GDTGCGKT) provides a ligand contact to ATP. Residues 603–606 (DEVH) carry the DEAH box motif. A Helicase C-terminal domain is found at 697-870 (LITDLVLQID…NLVVQAKIHM (174 aa)).

Belongs to the DEAD box helicase family. DEAH subfamily.

The protein resides in the cytoplasm. The protein localises to the mitochondrion. It is found in the mitochondrion matrix. Its subcellular location is the mitochondrion nucleoid. It carries out the reaction ATP + H2O = ADP + phosphate + H(+). Functionally, RNA-dependent helicase. Plays an important role in the assembly of the mitochondrial large ribosomal subunit. Required for optimal function of the zinc-finger antiviral protein ZC3HAV1. Associates with mitochondrial DNA. Involved in nervous system development and differentiation through its involvement in the up-regulation of a number of genes which are required for neurogenesis, including GSC, NCAM1, neurogenin, and NEUROD. The protein is ATP-dependent RNA helicase DHX30 (DHX30) of Gallus gallus (Chicken).